A 190-amino-acid chain; its full sequence is Hypoxanthine/guanine phosphoribosyltransferase (190 aa).

The protein belongs to the purine/pyrimidine phosphoribosyltransferase family. Archaeal HPRT subfamily. As to quaternary structure, homodimer.

Its subcellular location is the cytoplasm. It carries out the reaction IMP + diphosphate = hypoxanthine + 5-phospho-alpha-D-ribose 1-diphosphate. The enzyme catalyses GMP + diphosphate = guanine + 5-phospho-alpha-D-ribose 1-diphosphate. It functions in the pathway purine metabolism; IMP biosynthesis via salvage pathway; IMP from hypoxanthine: step 1/1. Catalyzes a salvage reaction resulting in the formation of IMP that is energically less costly than de novo synthesis. This Methanobacterium paludis (strain DSM 25820 / JCM 18151 / SWAN1) protein is Hypoxanthine/guanine phosphoribosyltransferase.